The sequence spans 116 residues: MNQNLLWFEKLKFNNQDLIPAIAQDYRDGTVLMMAWMNSESIQKTLSTGEAHYWSRSRSQLWHKGATSGHIQKVKELFYDCDGDTILLKVEQIGDIACHTGARSCFFNAVPIYPQS.

Asp-80 lines the Mg(2+) pocket. Cys-81 provides a ligand contact to Zn(2+). The Mg(2+) site is built by Asp-82 and Asp-84. Positions 98 and 105 each coordinate Zn(2+).

Belongs to the PRA-CH family. As to quaternary structure, homodimer. Mg(2+) is required as a cofactor. Zn(2+) serves as cofactor.

Its subcellular location is the cytoplasm. It catalyses the reaction 1-(5-phospho-beta-D-ribosyl)-5'-AMP + H2O = 1-(5-phospho-beta-D-ribosyl)-5-[(5-phospho-beta-D-ribosylamino)methylideneamino]imidazole-4-carboxamide. The protein operates within amino-acid biosynthesis; L-histidine biosynthesis; L-histidine from 5-phospho-alpha-D-ribose 1-diphosphate: step 3/9. Its function is as follows. Catalyzes the hydrolysis of the adenine ring of phosphoribosyl-AMP. This chain is Phosphoribosyl-AMP cyclohydrolase, found in Trichormus variabilis (strain ATCC 29413 / PCC 7937) (Anabaena variabilis).